Here is a 207-residue protein sequence, read N- to C-terminus: Large ribosomal subunit protein uL3 (207 aa).

A disordered region spans residues 119–143 (GFQGSIKRNGQHRGPMAHGSRYHRR).

This sequence belongs to the universal ribosomal protein uL3 family. Part of the 50S ribosomal subunit. Forms a cluster with proteins L14 and L19.

Its function is as follows. One of the primary rRNA binding proteins, it binds directly near the 3'-end of the 23S rRNA, where it nucleates assembly of the 50S subunit. The polypeptide is Large ribosomal subunit protein uL3 (Ligilactobacillus salivarius (strain UCC118) (Lactobacillus salivarius)).